A 103-amino-acid chain; its full sequence is N(4)-acetylcytidine amidohydrolase (103 aa).

In terms of domain architecture, ASCH spans 6–100; that stretch reads ITFFQRFQDD…GESQFYVIEF (95 aa). Lys21 acts as the Proton acceptor in catalysis. Thr24 (nucleophile) is an active-site residue. The active-site Proton donor is Glu74.

It belongs to the N(4)-acetylcytidine amidohydrolase family.

The enzyme catalyses N(4)-acetylcytidine + H2O = cytidine + acetate + H(+). The catalysed reaction is N(4)-acetyl-2'-deoxycytidine + H2O = 2'-deoxycytidine + acetate + H(+). It catalyses the reaction N(4)-acetylcytosine + H2O = cytosine + acetate + H(+). Catalyzes the hydrolysis of N(4)-acetylcytidine (ac4C). This Klebsiella pneumoniae subsp. pneumoniae (strain ATCC 700721 / MGH 78578) protein is N(4)-acetylcytidine amidohydrolase.